We begin with the raw amino-acid sequence, 138 residues long: MIFLKSVIKVIDNSGAQLAECIKVIRKGSPKSPAMVGDRIVCVIQKAKPLTQNITGTANTNRVKKGDICHAIVVRSKQRNMCRKDGSTVAFGDTACVLINKNTGEPLGTRIMANDGCVDRTLKDKGYNKICSLASRVI.

Belongs to the universal ribosomal protein uL14 family. Component of the mitochondrial large ribosomal subunit (mt-LSU). Mature yeast 74S mitochondrial ribosomes consist of a small (37S) and a large (54S) subunit. The 37S small subunit contains a 15S ribosomal RNA (15S mt-rRNA) and 34 different proteins. The 54S large subunit contains a 21S rRNA (21S mt-rRNA) and 46 different proteins.

It is found in the mitochondrion. In terms of biological role, component of the mitochondrial ribosome (mitoribosome), a dedicated translation machinery responsible for the synthesis of mitochondrial genome-encoded proteins, including at least some of the essential transmembrane subunits of the mitochondrial respiratory chain. The mitoribosomes are attached to the mitochondrial inner membrane and translation products are cotranslationally integrated into the membrane. The sequence is that of Large ribosomal subunit protein uL14m (MRPL38) from Saccharomyces cerevisiae (strain ATCC 204508 / S288c) (Baker's yeast).